The following is a 93-amino-acid chain: Putative pterin-4-alpha-carbinolamine dehydratase (93 aa).

The protein belongs to the pterin-4-alpha-carbinolamine dehydratase family.

The enzyme catalyses (4aS,6R)-4a-hydroxy-L-erythro-5,6,7,8-tetrahydrobiopterin = (6R)-L-erythro-6,7-dihydrobiopterin + H2O. This is Putative pterin-4-alpha-carbinolamine dehydratase from Nostoc punctiforme (strain ATCC 29133 / PCC 73102).